Reading from the N-terminus, the 341-residue chain is Trimethylamine N-oxide transport system ATP-binding protein TmoW (341 aa).

The ABC transporter domain maps to 6-265 (IKCESVYKIF…PATEYVRKFT (260 aa)). 61-68 (GLSGSGKS) serves as a coordination point for ATP.

This sequence belongs to the ABC transporter superfamily. The complex is probably composed of two ATP-binding proteins (TmoW), two transmembrane proteins (TmoV) and a solute-binding protein (TmoX).

It localises to the cell inner membrane. It carries out the reaction a quaternary ammonium(out) + ATP + H2O = a quaternary ammonium(in) + ADP + phosphate + H(+). Part of the ABC transporter complex TmoXWV involved in trimethylamine N-oxide (TMAO) import. Responsible for energy coupling to the transport system. In Pelagibacter ubique (strain HTCC1062), this protein is Trimethylamine N-oxide transport system ATP-binding protein TmoW.